The primary structure comprises 73 residues: Omega-conotoxin GVIA (73 aa).

The signal sequence occupies residues 1–22 (MKLTCVVIVAVLLLTACQLITA). Positions 23–45 (DDSRGTQKHRALGSTTELSLSTR) are excised as a propeptide. 3 disulfide bridges follow: Cys46–Cys61, Cys53–Cys64, and Cys60–Cys71. Residues Pro49, Pro55, and Pro66 each carry the 4-hydroxyproline modification. Residue Tyr72 is modified to Tyrosine amide; in form omega-conotoxin GVIA.

This sequence belongs to the conotoxin O1 superfamily. As to expression, expressed by the venom duct.

The protein resides in the secreted. In terms of biological role, omega-conotoxins act at presynaptic membranes, they bind and block voltage-gated calcium channels (Cav). This toxin blocks N-type calcium channels (Cav2.2/CACNA1B) with a high potency (it displaces [125I]GVIA with an IC(50)=3.7-38 pM). This chain is Omega-conotoxin GVIA, found in Conus geographus (Geography cone).